Consider the following 234-residue polypeptide: Putative methyltransferase-like protein 15P1 (234 aa).

Residues 100 to 102 (GGH), Asp-119, Phe-146, Asp-169, and Gln-176 each bind S-adenosyl-L-methionine.

This sequence belongs to the methyltransferase superfamily. RsmH family.

Probable S-adenosyl-L-methionine-dependent methyltransferase. This Homo sapiens (Human) protein is Putative methyltransferase-like protein 15P1 (METTL15P1).